The sequence spans 205 residues: MSPPCNCRLLLGFLIKWRATASTTCGSGLFMLTSSVPLLQEVCDASGTLACTASLFTSSGGFFSKPPVVPLDFLLLLLLLLLPLLLPPLPSVKGEPDACEIPVLPPLLFFLLLLLCVLPEPLETSFPFISAMQSLIRFLINFASHSFTTDHRSFLFHSLTSTNDNTRKRPDRVTNPFTISRSTFSNNVVYIRIYSYSSPKYTFPC.

This is an uncharacterized protein from Saccharomyces cerevisiae (strain ATCC 204508 / S288c) (Baker's yeast).